The sequence spans 230 residues: 5'-methylthioadenosine/S-adenosylhomocysteine nucleosidase (230 aa).

E12 acts as the Proton acceptor in catalysis. Residues G78, I153, and 174-175 contribute to the substrate site; that span reads ME. D198 acts as the Proton donor in catalysis.

Belongs to the PNP/UDP phosphorylase family. MtnN subfamily.

It carries out the reaction S-adenosyl-L-homocysteine + H2O = S-(5-deoxy-D-ribos-5-yl)-L-homocysteine + adenine. The enzyme catalyses S-methyl-5'-thioadenosine + H2O = 5-(methylsulfanyl)-D-ribose + adenine. The catalysed reaction is 5'-deoxyadenosine + H2O = 5-deoxy-D-ribose + adenine. It participates in amino-acid biosynthesis; L-methionine biosynthesis via salvage pathway; S-methyl-5-thio-alpha-D-ribose 1-phosphate from S-methyl-5'-thioadenosine (hydrolase route): step 1/2. Its function is as follows. Catalyzes the irreversible cleavage of the glycosidic bond in both 5'-methylthioadenosine (MTA) and S-adenosylhomocysteine (SAH/AdoHcy) to adenine and the corresponding thioribose, 5'-methylthioribose and S-ribosylhomocysteine, respectively. Also cleaves 5'-deoxyadenosine, a toxic by-product of radical S-adenosylmethionine (SAM) enzymes, into 5-deoxyribose and adenine. The polypeptide is 5'-methylthioadenosine/S-adenosylhomocysteine nucleosidase (Shewanella sediminis (strain HAW-EB3)).